Here is a 137-residue protein sequence, read N- to C-terminus: Large ribosomal subunit protein uL16 (137 aa).

It belongs to the universal ribosomal protein uL16 family. Part of the 50S ribosomal subunit.

In terms of biological role, binds 23S rRNA and is also seen to make contacts with the A and possibly P site tRNAs. The sequence is that of Large ribosomal subunit protein uL16 from Rhizobium johnstonii (strain DSM 114642 / LMG 32736 / 3841) (Rhizobium leguminosarum bv. viciae).